A 330-amino-acid polypeptide reads, in one-letter code: Beta-hexosaminidase (330 aa).

Residues aspartate 62, arginine 70, arginine 130, and 160 to 161 (KH) contribute to the substrate site. The active-site Proton donor/acceptor is the histidine 173. Aspartate 242 acts as the Nucleophile in catalysis.

This sequence belongs to the glycosyl hydrolase 3 family. NagZ subfamily.

The protein localises to the cytoplasm. It catalyses the reaction Hydrolysis of terminal non-reducing N-acetyl-D-hexosamine residues in N-acetyl-beta-D-hexosaminides.. Its pathway is cell wall biogenesis; peptidoglycan recycling. Plays a role in peptidoglycan recycling by cleaving the terminal beta-1,4-linked N-acetylglucosamine (GlcNAc) from peptide-linked peptidoglycan fragments, giving rise to free GlcNAc, anhydro-N-acetylmuramic acid and anhydro-N-acetylmuramic acid-linked peptides. In Vibrio cholerae serotype O1 (strain ATCC 39541 / Classical Ogawa 395 / O395), this protein is Beta-hexosaminidase.